A 60-amino-acid chain; its full sequence is Putative per-hexamer repeat protein 1 (60 aa).

This chain is Putative per-hexamer repeat protein 1 (Phxr1), found in Mus musculus (Mouse).